A 340-amino-acid polypeptide reads, in one-letter code: MNNWIHTSLDNSDIVLSSRIRLARNLSNFTYPHKISIEEGRKIVETIEKVLQNEESKYKVYRLWEMDPLDRVTYLEKYLISSKLILNNEKGAFITNEDETVSLMINEEDHIRLQCITNGFNLEEAYKCAEDLDDLIEENLDYAFDENLGYMTACPTNLGTGLRASVMIHLPTLTMNREINKIFSGLTQIGMTIRGIYGEGSKVVGNLFQVSNQLTLGLSEEEVINNLKAVVYQIINQEKLAREKIMKMHKYRIEDKVYRALGILNSAVLLDSEECLKLLSYVRLGVEMDIIKDVSKKVLNELTISIQPAMIQRIFNSKLTEEARQLKRAELVKRKLKNSI.

The 228-residue stretch at I14–A241 folds into the Phosphagen kinase C-terminal domain. Residues S17–R21, R112, R163–M167, and R194–E199 contribute to the ATP site.

This sequence belongs to the ATP:guanido phosphotransferase family.

It carries out the reaction L-arginyl-[protein] + ATP = N(omega)-phospho-L-arginyl-[protein] + ADP + H(+). In terms of biological role, catalyzes the specific phosphorylation of arginine residues in proteins. The protein is Protein-arginine kinase of Clostridium tetani (strain Massachusetts / E88).